A 487-amino-acid chain; its full sequence is Protein nucleotidyltransferase YdiU (487 aa).

Residues G90, G92, R93, K113, D125, G126, R176, and R183 each coordinate ATP. The active-site Proton acceptor is D252. The Mg(2+) site is built by N253 and D262. Position 262 (D262) interacts with ATP.

The protein belongs to the SELO family. Requires Mg(2+) as cofactor. It depends on Mn(2+) as a cofactor.

It carries out the reaction L-seryl-[protein] + ATP = 3-O-(5'-adenylyl)-L-seryl-[protein] + diphosphate. The catalysed reaction is L-threonyl-[protein] + ATP = 3-O-(5'-adenylyl)-L-threonyl-[protein] + diphosphate. The enzyme catalyses L-tyrosyl-[protein] + ATP = O-(5'-adenylyl)-L-tyrosyl-[protein] + diphosphate. It catalyses the reaction L-histidyl-[protein] + UTP = N(tele)-(5'-uridylyl)-L-histidyl-[protein] + diphosphate. It carries out the reaction L-seryl-[protein] + UTP = O-(5'-uridylyl)-L-seryl-[protein] + diphosphate. The catalysed reaction is L-tyrosyl-[protein] + UTP = O-(5'-uridylyl)-L-tyrosyl-[protein] + diphosphate. Its function is as follows. Nucleotidyltransferase involved in the post-translational modification of proteins. It can catalyze the addition of adenosine monophosphate (AMP) or uridine monophosphate (UMP) to a protein, resulting in modifications known as AMPylation and UMPylation. The protein is Protein nucleotidyltransferase YdiU of Pseudomonas fluorescens (strain SBW25).